A 606-amino-acid chain; its full sequence is Pickpocket protein 28 (606 aa).

A disordered region spans residues 1–26 (MRTLTESRRRQSGSSGCKKDSESDDD). The next 2 helical transmembrane spans lie at 66–86 (IFFG…ISNV) and 490–510 (GLLG…FFYI).

This sequence belongs to the amiloride-sensitive sodium channel (TC 1.A.6) family. As to expression, expressed in water-sensing neurons in taste bristles on the proboscis but not in carbonation-sensing taste peg neurons (at protein level). Expressed in the tracheal system.

The protein localises to the cell membrane. Its function is as follows. Osmosensitive ion channel that mediates the cellular and behavioral response to water. Plays an essential role in gustatory water reception. Part of a complex that plays a role in tracheal liquid clearance. Probable role in sodium transport. The chain is Pickpocket protein 28 (ppk28) from Drosophila melanogaster (Fruit fly).